The sequence spans 484 residues: Polyamine oxidase 3 (484 aa).

Positions 47, 55, 236, and 423 each coordinate FAD. The Microbody targeting signal signature appears at 482-484 (SRL).

This sequence belongs to the flavin monoamine oxidase family. Requires FAD as cofactor. As to expression, widely expressed.

The protein localises to the peroxisome. The catalysed reaction is spermine + O2 + H2O = 3-aminopropanal + spermidine + H2O2. The enzyme catalyses N(1)-acetylspermine + O2 + H2O = 3-acetamidopropanal + spermidine + H2O2. It catalyses the reaction norspermine + O2 + H2O = norspermidine + 3-aminopropanal + H2O2. It carries out the reaction spermidine + O2 + H2O = 3-aminopropanal + putrescine + H2O2. The catalysed reaction is thermospermine + O2 + H2O = 3-aminopropanal + spermidine + H2O2. The protein operates within amine and polyamine degradation; spermine degradation. Its pathway is amine and polyamine degradation; spermidine degradation. Its function is as follows. Flavoenzyme involved in polyamine back-conversion. Catalyzes the oxidation of the secondary amino group of polyamines, such as spermine, spermidine and their acetyl derivatives. Substrate preference is spermidine &gt; norspermine &gt; thermospermine &gt; N(1)-acetylspermine &gt; spermine. No activity detected when putrescine is used as substrate. Plays an important role in the regulation of polyamine intracellular concentration. This chain is Polyamine oxidase 3, found in Oryza sativa subsp. japonica (Rice).